Reading from the N-terminus, the 219-residue chain is Biofilm-associated metzincin protease inhibitor (219 aa).

Residues 4-24 (TWIYAASAAAIGGALIGGWLL) traverse the membrane as a helical segment. Positions 191-204 (DIAARSDPHGDHVD) are enriched in basic and acidic residues. The interval 191-219 (DIAARSDPHGDHVDAPLAELPPMPPPAQG) is disordered. Residues 209–219 (ELPPMPPPAQG) are compositionally biased toward pro residues.

It localises to the cell membrane. In terms of biological role, inhibitor of the metalloendopeptidase Mep72. Forms a protein-protein complex with the protease, which is the product of its coregulated adjacent gene, and probably prevents premature protease activity until the protein has been secreted. In Pseudomonas aeruginosa (strain ATCC 15692 / DSM 22644 / CIP 104116 / JCM 14847 / LMG 12228 / 1C / PRS 101 / PAO1), this protein is Biofilm-associated metzincin protease inhibitor.